We begin with the raw amino-acid sequence, 998 residues long: Antigenic heat-stable 120 kDa protein (998 aa).

Residues 1–69 (GGFMSQDHTG…LSGTISTDDQ (69 aa)) are disordered. Positions 12–21 (ENDEGYESDI) are enriched in acidic residues. Residues 46–68 (TPASSTQSTPAISTLSGTISTDD) show a composition bias toward polar residues.

It localises to the cytoplasm. The polypeptide is Antigenic heat-stable 120 kDa protein (sca4) (Rickettsia akari).